The sequence spans 305 residues: NK1 transcription factor-related protein 2 (305 aa).

Disordered stretches follow at residues 51-158 (EEVE…KPRR) and 210-257 (KWKK…PGAL). Positions 87-96 (SEAEEEEEAE) are enriched in acidic residues. Basic and acidic residues predominate over residues 97–115 (DAGRAHQPERWQGVHEGSP). Positions 129 to 140 (AEGLPASPGSPG) are enriched in low complexity. Residues 156-215 (PRRARTAFTYEQLVALENKFRATRYLSVCERLNLALSLSLTETQVKIWFQNRRTKWKKQN) constitute a DNA-binding region (homeobox).

This sequence belongs to the NK-1 homeobox family. Interacts (via the homeodomain) with HIPK1, HIPK2, and HIPK3. Post-translationally, phosphorylated by HIPK2 in vitro. In terms of tissue distribution, expression detected in the brain, testis and spleen. In the testis, expressed in the germ cells of the seminiferous epithelium, predominantly in elongating spermatids and spermatozoa. Expressed throughout the brain with highest levels in regions of the cerebral cortex, hippocampus, diencephalon, pons, medulla and cerebellum.

Its subcellular location is the nucleus. The protein resides in the nucleolus. Transcriptional repressor. May play a role in early development as a Wnt/beta-catenin effector, hence controlling pluripotency and preimplantation development of embryonic stem cells. May promote adipogenesis in mesenchymal stem cells, possibly by inhibiting the expression of the antiadipogenic factor NR2F2. May inhibit osteoblastogenic differentiation. In Mus musculus (Mouse), this protein is NK1 transcription factor-related protein 2 (Nkx1-2).